A 688-amino-acid chain; its full sequence is Elongation factor G (688 aa).

The tr-type G domain occupies 8–282 (DKFRNFGIMA…GVVDYLPSPL (275 aa)). GTP contacts are provided by residues 17–24 (AHIDAGKT), 81–85 (DTPGH), and 135–138 (NKMD).

It belongs to the TRAFAC class translation factor GTPase superfamily. Classic translation factor GTPase family. EF-G/EF-2 subfamily.

The protein resides in the cytoplasm. In terms of biological role, catalyzes the GTP-dependent ribosomal translocation step during translation elongation. During this step, the ribosome changes from the pre-translocational (PRE) to the post-translocational (POST) state as the newly formed A-site-bound peptidyl-tRNA and P-site-bound deacylated tRNA move to the P and E sites, respectively. Catalyzes the coordinated movement of the two tRNA molecules, the mRNA and conformational changes in the ribosome. This Clostridium botulinum (strain Eklund 17B / Type B) protein is Elongation factor G.